We begin with the raw amino-acid sequence, 622 residues long: Procollagen galactosyltransferase 1 (622 aa).

The signal sequence occupies residues 1–29 (MAAAPRAGRRRGQPLLALLLLLLAPLPPG). N-linked (GlcNAc...) asparagine glycosylation is found at Asn96, Asn184, and Asn381. The span at 588–606 (RAKSQKMREQQALSREAKN) shows a compositional bias: basic and acidic residues. Positions 588–622 (RAKSQKMREQQALSREAKNSDVLQSPLDSAARDEL) are disordered. The Endoplasmic reticulum retention motif motif lies at 619 to 622 (RDEL).

This sequence belongs to the glycosyltransferase 25 family. N-glycosylated. In terms of tissue distribution, ubiquitous with higher levels in placenta, heart, lung and spleen.

Its subcellular location is the endoplasmic reticulum lumen. It catalyses the reaction (5R)-5-hydroxy-L-lysyl-[collagen] + UDP-alpha-D-galactose = (5R)-5-O-(beta-D-galactosyl)-5-hydroxy-L-lysyl-[collagen] + UDP + H(+). Functionally, beta-galactosyltransferase that transfers beta-galactose to hydroxylysine residues of type I collagen. By acting on collagen glycosylation, facilitates the formation of collagen triple helix. Also involved in the biosynthesis of collagen type IV. This chain is Procollagen galactosyltransferase 1 (COLGALT1), found in Homo sapiens (Human).